The following is a 1498-amino-acid chain: Mitogen-activated protein kinase kinase kinase nsy-1 (1498 aa).

Disordered regions lie at residues 1 to 35 (MSQNNKRQVQHNHEMSNDVCPLPLPPRGAPPPTAY) and 190 to 209 (LQSYDKNNNDDDSKPPFART). Positions 22-33 (LPLPPRGAPPPT) are enriched in pro residues. One can recognise a Protein kinase domain in the interval 664–925 (SNERVVLGKG…AKDLLQDPFI (262 aa)). ATP-binding positions include 670-678 (LGKGTYGTV) and lysine 693. Aspartate 790 serves as the catalytic Proton acceptor. Residues 1022 to 1050 (IDHARNRTFSSSSPVPDGQSSAGTNMSHP) are disordered. Over residues 1031 to 1042 (SSSSPVPDGQSS) the composition is skewed to low complexity. Residues 1276 to 1314 (SREERVREDRKELRTLQEENEILIERLLQVERELNAQLK) adopt a coiled-coil conformation. The tract at residues 1461 to 1498 (QPVFLSPMRSRDDSLDDYHSSSADDMYTGAAAETSSGN) is disordered. The span at 1469–1479 (RSRDDSLDDYH) shows a compositional bias: basic and acidic residues.

It belongs to the protein kinase superfamily. STE Ser/Thr protein kinase family. MAP kinase kinase kinase subfamily. In terms of assembly, interacts with unc-43. Interacts with sek-1. Requires Mg(2+) as cofactor. In terms of processing, may be phosphorylated upon pathogenic bacterial infection. May be regulated by proteasomal degradation mediated by the E3-ubiquitin ligase rle-1. As to expression, expressed in intestine, hypodermis, rectal gland cell and neurons including sensory AWC neurons.

The protein localises to the cell projection. It is found in the axon. Its subcellular location is the perikaryon. It catalyses the reaction L-seryl-[protein] + ATP = O-phospho-L-seryl-[protein] + ADP + H(+). It carries out the reaction L-threonyl-[protein] + ATP = O-phospho-L-threonyl-[protein] + ADP + H(+). Its function is as follows. Serine/threonine-protein kinase which, by phosphorylating and activating sek-1, plays an important role in the activation of the p38 pathway also composed of the downstream effectors sek-1 and pmk-1. Downstream of CaMKII unc-43 and adapter protein tir-1, plays a role in determining asymmetric cell fates in olfactory AWC neurons during neuronal development. Activation results in the repression of odorant receptor str-2 expression in one of the 2 AWC neurons. Involved in resistance to pathogenic Gram-positive and Gram-negative bacterial and fungal infection. Involved in resistance to the nematotoxic C.cinerea galectin Cgl2. Probably by activating the sek1/pmk-1/skn-1 pathway, involved in the up-regulation of gcs-1 and glutathione-S-transferase gst-4 expression upon bacterial infection. Probably downstream of tir-1 and nipi-3, required for the expression of antimicrobial peptide nlp-29 in the epidermis in response to fungal infection or physical injury. Plays a role in resistance to several environmental stresses including oxidative, protein misfolding (ER) and osmotic stresses, and DNA-damaging reagents. Plays a role in the stabilization of transcription factor rnt-1 in the intestine during oxidative stress. Involved in germline apoptosis induced by heavy metals, such as Cu(2+). In addition, plays a role in the up-regulation of gcs-1 upon arsenite treatment, most likely through activation of pmk-1, to confer protection against toxicity induced by heavy metals. Plays a role downstream of tir-1 in regulating susceptibility to anoxia. Involved in egg laying. The polypeptide is Mitogen-activated protein kinase kinase kinase nsy-1 (Caenorhabditis elegans).